The primary structure comprises 430 residues: Gamma-glutamyl phosphate reductase (430 aa).

Belongs to the gamma-glutamyl phosphate reductase family.

It is found in the cytoplasm. The catalysed reaction is L-glutamate 5-semialdehyde + phosphate + NADP(+) = L-glutamyl 5-phosphate + NADPH + H(+). Its pathway is amino-acid biosynthesis; L-proline biosynthesis; L-glutamate 5-semialdehyde from L-glutamate: step 2/2. Functionally, catalyzes the NADPH-dependent reduction of L-glutamate 5-phosphate into L-glutamate 5-semialdehyde and phosphate. The product spontaneously undergoes cyclization to form 1-pyrroline-5-carboxylate. This Psychrobacter arcticus (strain DSM 17307 / VKM B-2377 / 273-4) protein is Gamma-glutamyl phosphate reductase.